We begin with the raw amino-acid sequence, 233 residues long: Large ribosomal subunit protein uL1 (233 aa).

It belongs to the universal ribosomal protein uL1 family. As to quaternary structure, part of the 50S ribosomal subunit.

Functionally, binds directly to 23S rRNA. The L1 stalk is quite mobile in the ribosome, and is involved in E site tRNA release. In terms of biological role, protein L1 is also a translational repressor protein, it controls the translation of the L11 operon by binding to its mRNA. The chain is Large ribosomal subunit protein uL1 from Pseudoalteromonas atlantica (strain T6c / ATCC BAA-1087).